The primary structure comprises 135 residues: Large ribosomal subunit protein uL16c (135 aa).

This sequence belongs to the universal ribosomal protein uL16 family. As to quaternary structure, part of the 50S ribosomal subunit.

Its subcellular location is the plastid. The protein resides in the chloroplast. This Jasminum nudiflorum (Winter jasmine) protein is Large ribosomal subunit protein uL16c.